Reading from the N-terminus, the 417-residue chain is Gamma-glutamyl phosphate reductase (417 aa).

It belongs to the gamma-glutamyl phosphate reductase family.

The protein localises to the cytoplasm. It carries out the reaction L-glutamate 5-semialdehyde + phosphate + NADP(+) = L-glutamyl 5-phosphate + NADPH + H(+). It functions in the pathway amino-acid biosynthesis; L-proline biosynthesis; L-glutamate 5-semialdehyde from L-glutamate: step 2/2. Functionally, catalyzes the NADPH-dependent reduction of L-glutamate 5-phosphate into L-glutamate 5-semialdehyde and phosphate. The product spontaneously undergoes cyclization to form 1-pyrroline-5-carboxylate. In Streptococcus agalactiae serotype Ia (strain ATCC 27591 / A909 / CDC SS700), this protein is Gamma-glutamyl phosphate reductase.